Here is a 53-residue protein sequence, read N- to C-terminus: MFSQNICMWRDCFARCSPGYYERFECFHDCITKGYDDGNCVPGPKTGRCCCTR.

4 cysteine pairs are disulfide-bonded: Cys-12-Cys-51, Cys-16-Cys-40, Cys-26-Cys-49, and Cys-30-Cys-50.

The protein belongs to the DEFL family.

The polypeptide is Putative defensin-like protein 53 (Arabidopsis thaliana (Mouse-ear cress)).